The sequence spans 464 residues: tRNA-2-methylthio-N(6)-dimethylallyladenosine synthase (464 aa).

The MTTase N-terminal domain occupies 5-122 (RKLYVKSFGC…LPEMLARVRD (118 aa)). Positions 14, 50, 85, 163, 167, and 170 each coordinate [4Fe-4S] cluster. Residues 149 to 383 (KKRGPTAFVT…VLEASKTAFD (235 aa)) enclose the Radical SAM core domain. Positions 384–446 (RACMGRRFDI…PNSLAGQVVD (63 aa)) constitute a TRAM domain.

It belongs to the methylthiotransferase family. MiaB subfamily. Monomer. [4Fe-4S] cluster is required as a cofactor.

It localises to the cytoplasm. The enzyme catalyses N(6)-dimethylallyladenosine(37) in tRNA + (sulfur carrier)-SH + AH2 + 2 S-adenosyl-L-methionine = 2-methylsulfanyl-N(6)-dimethylallyladenosine(37) in tRNA + (sulfur carrier)-H + 5'-deoxyadenosine + L-methionine + A + S-adenosyl-L-homocysteine + 2 H(+). In terms of biological role, catalyzes the methylthiolation of N6-(dimethylallyl)adenosine (i(6)A), leading to the formation of 2-methylthio-N6-(dimethylallyl)adenosine (ms(2)i(6)A) at position 37 in tRNAs that read codons beginning with uridine. The protein is tRNA-2-methylthio-N(6)-dimethylallyladenosine synthase of Azorhizobium caulinodans (strain ATCC 43989 / DSM 5975 / JCM 20966 / LMG 6465 / NBRC 14845 / NCIMB 13405 / ORS 571).